The following is a 429-amino-acid chain: UDP-N-acetylglucosamine 1-carboxyvinyltransferase (429 aa).

Phosphoenolpyruvate is bound at residue 22-23 (KN). UDP-N-acetyl-alpha-D-glucosamine is bound at residue arginine 102. Residue cysteine 126 is the Proton donor of the active site. Cysteine 126 is modified (2-(S-cysteinyl)pyruvic acid O-phosphothioketal). Residues 131–135 (RPVDL), 171–174 (KVSV), aspartate 316, and isoleucine 338 contribute to the UDP-N-acetyl-alpha-D-glucosamine site.

This sequence belongs to the EPSP synthase family. MurA subfamily.

The protein localises to the cytoplasm. The catalysed reaction is phosphoenolpyruvate + UDP-N-acetyl-alpha-D-glucosamine = UDP-N-acetyl-3-O-(1-carboxyvinyl)-alpha-D-glucosamine + phosphate. The protein operates within cell wall biogenesis; peptidoglycan biosynthesis. Cell wall formation. Adds enolpyruvyl to UDP-N-acetylglucosamine. The polypeptide is UDP-N-acetylglucosamine 1-carboxyvinyltransferase (Chelativorans sp. (strain BNC1)).